Consider the following 340-residue polypeptide: Guanine nucleotide-binding protein G(I)/G(S)/G(T) subunit beta-3 (340 aa).

WD repeat units follow at residues 53–83 (GHLA…IVWD), 95–125 (LRSS…SIYN), 141–170 (AHTG…ALWD), 182–212 (GHTG…KLWD), 224–254 (GHES…RLFD), 268–298 (SIIC…NVWD), and 310–340 (GHDN…KIWN).

The protein belongs to the WD repeat G protein beta family. In terms of assembly, g proteins are composed of 3 units, alpha, beta and gamma. Interacts with RASD2.

Functionally, guanine nucleotide-binding proteins (G proteins) are involved as a modulator or transducer in various transmembrane signaling systems. The beta and gamma chains are required for the GTPase activity, for replacement of GDP by GTP, and for G protein-effector interaction. The protein is Guanine nucleotide-binding protein G(I)/G(S)/G(T) subunit beta-3 (GNB3) of Homo sapiens (Human).